Reading from the N-terminus, the 430-residue chain is Adenylosuccinate synthetase (430 aa).

Residues 12–18 (GDEGKGK) and 40–42 (GHT) each bind GTP. The active-site Proton acceptor is the D13. Residues D13 and G40 each contribute to the Mg(2+) site. Residues 13–16 (DEGK), 38–41 (NAGH), T128, R142, Q223, T238, and R302 contribute to the IMP site. Catalysis depends on H41, which acts as the Proton donor. 298 to 304 (TTTGRPR) lines the substrate pocket. GTP contacts are provided by residues R304, 330-332 (SID), and 412-414 (SVG).

The protein belongs to the adenylosuccinate synthetase family. Homodimer. Requires Mg(2+) as cofactor.

It localises to the cytoplasm. It catalyses the reaction IMP + L-aspartate + GTP = N(6)-(1,2-dicarboxyethyl)-AMP + GDP + phosphate + 2 H(+). The protein operates within purine metabolism; AMP biosynthesis via de novo pathway; AMP from IMP: step 1/2. Its function is as follows. Plays an important role in the de novo pathway of purine nucleotide biosynthesis. Catalyzes the first committed step in the biosynthesis of AMP from IMP. This Streptococcus suis (strain 98HAH33) protein is Adenylosuccinate synthetase.